The primary structure comprises 84 residues: RNA-binding protein Hfq (84 aa).

One can recognise a Sm domain in the interval Asp10–Val70.

Belongs to the Hfq family. In terms of assembly, homohexamer.

Functionally, RNA chaperone that binds small regulatory RNA (sRNAs) and mRNAs to facilitate mRNA translational regulation in response to envelope stress, environmental stress and changes in metabolite concentrations. Also binds with high specificity to tRNAs. This Moorella thermoacetica (strain ATCC 39073 / JCM 9320) protein is RNA-binding protein Hfq.